The following is a 494-amino-acid chain: Inosine-5'-monophosphate dehydrogenase (494 aa).

2 CBS domains span residues 93-154 (IIRN…NEKI) and 158-217 (MTTD…CKDM). Residues aspartate 251 and 301-303 (GIG) each bind NAD(+). Residues glycine 303 and glycine 305 each coordinate K(+). Position 306 (serine 306) interacts with IMP. Position 308 (cysteine 308) interacts with K(+). The active-site Thioimidate intermediate is cysteine 308. IMP-binding positions include 341 to 343 (DGG), 364 to 365 (GS), and 388 to 392 (YRGMG). Residue arginine 406 is the Proton acceptor of the active site. Glutamate 421 provides a ligand contact to IMP. Glutamate 475, serine 476, and histidine 477 together coordinate K(+).

The protein belongs to the IMPDH/GMPR family. Homotetramer. K(+) serves as cofactor.

The enzyme catalyses IMP + NAD(+) + H2O = XMP + NADH + H(+). It functions in the pathway purine metabolism; XMP biosynthesis via de novo pathway; XMP from IMP: step 1/1. With respect to regulation, mycophenolic acid (MPA) is a non-competitive inhibitor that prevents formation of the closed enzyme conformation by binding to the same site as the amobile flap. In contrast, mizoribine monophosphate (MZP) is a competitive inhibitor that induces the closed conformation. MPA is a potent inhibitor of mammalian IMPDHs but a poor inhibitor of the bacterial enzymes. MZP is a more potent inhibitor of bacterial IMPDH. Its function is as follows. Catalyzes the conversion of inosine 5'-phosphate (IMP) to xanthosine 5'-phosphate (XMP), the first committed and rate-limiting step in the de novo synthesis of guanine nucleotides, and therefore plays an important role in the regulation of cell growth. This is Inosine-5'-monophosphate dehydrogenase from Chlorobaculum parvum (strain DSM 263 / NCIMB 8327) (Chlorobium vibrioforme subsp. thiosulfatophilum).